The primary structure comprises 199 residues: Putative acetyltransferase SACOL2570 (199 aa).

This sequence belongs to the transferase hexapeptide repeat family.

In Staphylococcus aureus (strain COL), this protein is Putative acetyltransferase SACOL2570.